We begin with the raw amino-acid sequence, 218 residues long: Insulin-induced gene 2 protein (218 aa).

The Cytoplasmic portion of the chain corresponds to 1–21 (MGDRENVSYGSRPILAQKMNL). A helical transmembrane segment spans residues 22–44 (LLRGFLLFLIGVFLALVLNLLQV). Residues 45–63 (QRNVTLFPPDVLSSLFSSA) are Lumenal-facing. The chain crosses the membrane as a helical span at residues 64–81 (WWVPLCCGTAAAAIGLLY). The Cytoplasmic portion of the chain corresponds to 82-96 (PCIDRHLGEPHKFKR). The chain crosses the membrane as a helical span at residues 97–119 (EWSSVMRCVAVFVGINHASAKVD). Residues 120–122 (FAN) lie on the Lumenal side of the membrane. A helical transmembrane segment spans residues 123–141 (NMQLSLTLAALSIGLWWTF). At 142–146 (DRSRS) the chain is on the cytoplasmic side. The chain crosses the membrane as a helical span at residues 147 to 168 (GLGLGIGISFFATLVSQLLVYN). Residues 169–182 (GVYEYTAPDFLYVR) are Lumenal-facing. The helical transmembrane segment at 183-200 (SWLPCIFFAGGITMGNIG) threads the bilayer. Residues 201 to 218 (RQLEMYERKALVEKSHRD) are Cytoplasmic-facing. Residues 212–218 (VEKSHRD) carry the KxHxx motif.

Belongs to the INSIG family. As to quaternary structure, interacts with scap; interaction is direct and only takes place in the presence of sterols; it prevents interaction between scap and the coat protein complex II (COPII). Associates with the SCAP-SREBP complex; association is mediated via its interaction with scap and only takes place in the presence of sterols.

Its subcellular location is the endoplasmic reticulum membrane. In terms of biological role, oxysterol-binding protein that mediates feedback control of cholesterol synthesis by controlling both endoplasmic reticulum to Golgi transport of scap and degradation of hmgcr. Acts as a negative regulator of cholesterol biosynthesis by mediating the retention of the SCAP-SREBP complex in the endoplasmic reticulum, thereby blocking the processing of sterol regulatory element-binding proteins (SREBPs). Binds oxysterol, including 22-hydroxycholesterol, 24-hydroxycholesterol, 25-hydroxycholesterol and 27-hydroxycholesterol, regulating interaction with scap and retention of the SCAP-SREBP complex in the endoplasmic reticulum. In presence of oxysterol, interacts with scap, retaining the SCAP-SREBP complex in the endoplasmic reticulum, thereby preventing scap from escorting SREBPs to the Golgi. Sterol deprivation reduce oxysterol-binding, disrupting the interaction between insig2 and scap, thereby promoting Golgi transport of the SCAP-SREBP complex, followed by processing and nuclear translocation of SREBPs. Also regulates cholesterol synthesis by regulating degradation of hmgcr. The chain is Insulin-induced gene 2 protein from Xenopus laevis (African clawed frog).